The following is a 122-amino-acid chain: Large ribosomal subunit protein bL12 (122 aa).

Belongs to the bacterial ribosomal protein bL12 family. In terms of assembly, homodimer. Part of the ribosomal stalk of the 50S ribosomal subunit. Forms a multimeric L10(L12)X complex, where L10 forms an elongated spine to which 2 to 4 L12 dimers bind in a sequential fashion. Binds GTP-bound translation factors.

In terms of biological role, forms part of the ribosomal stalk which helps the ribosome interact with GTP-bound translation factors. Is thus essential for accurate translation. The polypeptide is Large ribosomal subunit protein bL12 (Xylella fastidiosa (strain 9a5c)).